Consider the following 159-residue polypeptide: Phosphopantetheine adenylyltransferase (159 aa).

A substrate-binding site is contributed by T9. Residues 9 to 10 (TF) and H17 each bind ATP. Residues K41, L73, and R87 each coordinate substrate. Residues 88-90 (GLR), E98, and 123-129 (YMFISAT) each bind ATP.

It belongs to the bacterial CoaD family. In terms of assembly, homohexamer. Mg(2+) serves as cofactor.

It localises to the cytoplasm. It catalyses the reaction (R)-4'-phosphopantetheine + ATP + H(+) = 3'-dephospho-CoA + diphosphate. It functions in the pathway cofactor biosynthesis; coenzyme A biosynthesis; CoA from (R)-pantothenate: step 4/5. Its function is as follows. Reversibly transfers an adenylyl group from ATP to 4'-phosphopantetheine, yielding dephospho-CoA (dPCoA) and pyrophosphate. This is Phosphopantetheine adenylyltransferase from Nitrosomonas europaea (strain ATCC 19718 / CIP 103999 / KCTC 2705 / NBRC 14298).